A 303-amino-acid chain; its full sequence is MATH domain and coiled-coil domain-containing protein At3g58250 (303 aa).

The 128-residue stretch at 8–135 folds into the MATH domain; that stretch reads KKKFSWVIKN…KGELKIVVEI (128 aa). A coiled-coil region spans residues 231–287; that stretch reads KLDWLKKKLDQVTQKKEKEAAGETRMHEIGEELKDLKLKCSDLEAQLDKEKADVLAA.

This chain is MATH domain and coiled-coil domain-containing protein At3g58250, found in Arabidopsis thaliana (Mouse-ear cress).